The primary structure comprises 275 residues: Protein unc-50 homolog (275 aa).

The segment covering 1–26 (MTQYSHVKYTQSPTPSVVSGYSSASR) has biased composition (polar residues). Residues 1–39 (MTQYSHVKYTQSPTPSVVSGYSSASRLHSPLPPPANHRR) are disordered. Topologically, residues 1-99 (MTQYSHVKYT…TKSQFARDDP (99 aa)) are cytoplasmic. A helical transmembrane segment spans residues 100-120 (AFLVLLVVCLCVTSLGFAYVL). The Lumenal segment spans residues 121-129 (GLSFWQSIS). A helical membrane pass occupies residues 130 to 150 (FIFYVVFVDCIFVGIIIASFF). Residues 151-178 (WAVTNRYLRTNSLEPDIEWGYAFDVHLN) lie on the Cytoplasmic side of the membrane. A helical transmembrane segment spans residues 179 to 199 (AFFPPLMLLHFIQLFFYNWLI). Residues 200–207 (SQTWFISR) are Lumenal-facing. The chain crosses the membrane as a helical span at residues 208–228 (FLGNTFWLMGMGYYVYITFLG). Over 229–239 (YNCIPHLKNTR) the chain is Cytoplasmic. A helical membrane pass occupies residues 240 to 260 (IILIALPIIFLLFLVVTIIGW). Over 261–275 (NATISFVNFYKYRVY) the chain is Lumenal.

It belongs to the unc-50 family.

It is found in the golgi apparatus membrane. Functionally, required for cell surface expression of acetylcholine receptors. In Drosophila melanogaster (Fruit fly), this protein is Protein unc-50 homolog.